Consider the following 221-residue polypeptide: MTDTAQPRPRTRLYLITPPQIGDVSAFRKSLEETLSAGDVASLQLRLKGQDGMIDMQATQEVGAAVTAMAQEAGVAVLINDAAELSRQLGADGVHLGWDDMPVKTARALLGPDAIIGATAKNSYHRAMQAGEDGADYVAFGAFYPTTTKEGTIPAELELLEVWQSAMILPCVAIGGITVSNAAPLVTAGADFLAVSSGVWNHEDGPAAAVRAFNALFESLA.

Residues 44 to 48 (QLRLK) and Asn-80 each bind 4-amino-2-methyl-5-(diphosphooxymethyl)pyrimidine. Mg(2+)-binding residues include Asp-81 and Asp-100. Thr-119 serves as a coordination point for 4-amino-2-methyl-5-(diphosphooxymethyl)pyrimidine. 146–148 (TTT) contributes to the 2-[(2R,5Z)-2-carboxy-4-methylthiazol-5(2H)-ylidene]ethyl phosphate binding site. Residue Lys-149 participates in 4-amino-2-methyl-5-(diphosphooxymethyl)pyrimidine binding. Residue Gly-176 coordinates 2-[(2R,5Z)-2-carboxy-4-methylthiazol-5(2H)-ylidene]ethyl phosphate.

The protein belongs to the thiamine-phosphate synthase family. The cofactor is Mg(2+).

The catalysed reaction is 2-[(2R,5Z)-2-carboxy-4-methylthiazol-5(2H)-ylidene]ethyl phosphate + 4-amino-2-methyl-5-(diphosphooxymethyl)pyrimidine + 2 H(+) = thiamine phosphate + CO2 + diphosphate. It catalyses the reaction 2-(2-carboxy-4-methylthiazol-5-yl)ethyl phosphate + 4-amino-2-methyl-5-(diphosphooxymethyl)pyrimidine + 2 H(+) = thiamine phosphate + CO2 + diphosphate. The enzyme catalyses 4-methyl-5-(2-phosphooxyethyl)-thiazole + 4-amino-2-methyl-5-(diphosphooxymethyl)pyrimidine + H(+) = thiamine phosphate + diphosphate. The protein operates within cofactor biosynthesis; thiamine diphosphate biosynthesis; thiamine phosphate from 4-amino-2-methyl-5-diphosphomethylpyrimidine and 4-methyl-5-(2-phosphoethyl)-thiazole: step 1/1. Condenses 4-methyl-5-(beta-hydroxyethyl)thiazole monophosphate (THZ-P) and 2-methyl-4-amino-5-hydroxymethyl pyrimidine pyrophosphate (HMP-PP) to form thiamine monophosphate (TMP). The polypeptide is Thiamine-phosphate synthase (Hyphomonas neptunium (strain ATCC 15444)).